A 121-amino-acid polypeptide reads, in one-letter code: Large ribosomal subunit protein bL12 (121 aa).

This sequence belongs to the bacterial ribosomal protein bL12 family. As to quaternary structure, homodimer. Part of the ribosomal stalk of the 50S ribosomal subunit. Forms a multimeric L10(L12)X complex, where L10 forms an elongated spine to which 2 to 4 L12 dimers bind in a sequential fashion. Binds GTP-bound translation factors.

Functionally, forms part of the ribosomal stalk which helps the ribosome interact with GTP-bound translation factors. Is thus essential for accurate translation. This chain is Large ribosomal subunit protein bL12, found in Clostridioides difficile (strain 630) (Peptoclostridium difficile).